Consider the following 999-residue polypeptide: Bifunctional glutamine synthetase adenylyltransferase/adenylyl-removing enzyme (999 aa).

The tract at residues 1-493 is adenylyl removase; that stretch reads MFVRKPATER…LHAKLFYQPL (493 aa). The interval 498–999 is adenylyl transferase; that stretch reads GHTALGIGEG…KAVVRKIFGG (502 aa).

The protein belongs to the GlnE family. The cofactor is Mg(2+).

The enzyme catalyses [glutamine synthetase]-O(4)-(5'-adenylyl)-L-tyrosine + phosphate = [glutamine synthetase]-L-tyrosine + ADP. It catalyses the reaction [glutamine synthetase]-L-tyrosine + ATP = [glutamine synthetase]-O(4)-(5'-adenylyl)-L-tyrosine + diphosphate. Its function is as follows. Involved in the regulation of glutamine synthetase GlnA, a key enzyme in the process to assimilate ammonia. When cellular nitrogen levels are high, the C-terminal adenylyl transferase (AT) inactivates GlnA by covalent transfer of an adenylyl group from ATP to specific tyrosine residue of GlnA, thus reducing its activity. Conversely, when nitrogen levels are low, the N-terminal adenylyl removase (AR) activates GlnA by removing the adenylyl group by phosphorolysis, increasing its activity. The regulatory region of GlnE binds the signal transduction protein PII (GlnB) which indicates the nitrogen status of the cell. This Mycolicibacterium smegmatis (strain ATCC 700084 / mc(2)155) (Mycobacterium smegmatis) protein is Bifunctional glutamine synthetase adenylyltransferase/adenylyl-removing enzyme.